Consider the following 70-residue polypeptide: Brevinin-1Vb (70 aa).

The N-terminal stretch at 1 to 22 (MFTLKKSLLLLFFLGTINLSLC) is a signal peptide. Residues 23-44 (EEERNAEEERRDEPDEMNVEVE) constitute a propeptide that is removed on maturation. Cys64 and Cys70 are joined by a disulfide.

In terms of tissue distribution, expressed by the skin glands.

Its subcellular location is the secreted. In terms of biological role, antimicrobial peptide. This is Brevinin-1Vb from Odorrana versabilis (Chinese bamboo leaf odorous frog).